The chain runs to 66 residues: Putative transmembrane protein ORF66 (66 aa).

Over 1–6 (MSDVDD) the chain is Cytoplasmic. The chain crosses the membrane as a helical span at residues 7 to 27 (TIVDSIAIVGAILIGIFLIVV). The Extracellular portion of the chain corresponds to 28–39 (SVSNTSLFNNTE). The chain crosses the membrane as a helical span at residues 40–60 (YDSMINSVLVIISSVIAYTLG). Residues 61–66 (KRRSKS) lie on the Cytoplasmic side of the membrane.

Its subcellular location is the host membrane. This is Putative transmembrane protein ORF66 from Acidianus filamentous virus 2 (isolate Italy/Pozzuoli) (AFV-2).